Here is a 310-residue protein sequence, read N- to C-terminus: 2-ketogluconate reductase (310 aa).

NADP(+)-binding positions include 151 to 152 (HI) and 227 to 229 (IAR). Active-site residues include Arg229 and Glu258. Residue His276 is the Proton donor of the active site.

It belongs to the D-isomer specific 2-hydroxyacid dehydrogenase family. As to quaternary structure, homohexamer.

The catalysed reaction is D-gluconate + NADP(+) = 2-dehydro-D-gluconate + NADPH + H(+). In terms of biological role, catalyzes the reduction of 2-keto-D-gluconate to gluconate. Can also catalyze the reduction of 2-keto-L-gulonate. Can use both NADH and NADPH efficiently, with a slight preference for NADPH. The protein is 2-ketogluconate reductase of Gluconobacter oxydans (strain 621H) (Gluconobacter suboxydans).